Consider the following 256-residue polypeptide: Alcohol dehydrogenase (256 aa).

An N-acetylserine modification is found at Ser2. NAD(+)-binding positions include 12–41 and Asp65; that span reads FVAG…LDRI. Ser140 provides a ligand contact to substrate. The active-site Proton acceptor is the Tyr153. Lys157 is an NAD(+) binding site.

It belongs to the short-chain dehydrogenases/reductases (SDR) family. As to quaternary structure, homodimer.

It catalyses the reaction a primary alcohol + NAD(+) = an aldehyde + NADH + H(+). It carries out the reaction a secondary alcohol + NAD(+) = a ketone + NADH + H(+). Its activity is regulated as follows. Inhibited by 2,2,2-trifluoroethanol and pyrazole. This chain is Alcohol dehydrogenase (Adh), found in Drosophila melanogaster (Fruit fly).